The following is a 466-amino-acid chain: Histidine--tRNA ligase (466 aa).

The protein belongs to the class-II aminoacyl-tRNA synthetase family. As to quaternary structure, homodimer.

The protein resides in the cytoplasm. It catalyses the reaction tRNA(His) + L-histidine + ATP = L-histidyl-tRNA(His) + AMP + diphosphate + H(+). The protein is Histidine--tRNA ligase of Bifidobacterium animalis subsp. lactis (strain AD011).